Consider the following 248-residue polypeptide: UPF0524 protein C3orf70 homolog (248 aa).

The segment at 169–248 (KESDTPKLGH…EVIETMETTV (80 aa)) is disordered. Acidic residues predominate over residues 200-227 (SCDEDTEEGAELSSEEDYSPESSWEPDE).

It belongs to the UPF0524 family.

Functionally, may play a role in neuronal and neurobehavioral development. This is UPF0524 protein C3orf70 homolog from Mus musculus (Mouse).